The sequence spans 364 residues: tRNA 2-selenouridine synthase (364 aa).

The region spanning 14 to 137 (LLADTPLIDV…LRQTAIQATW (124 aa)) is the Rhodanese domain. Cys-97 functions as the S-selanylcysteine intermediate in the catalytic mechanism.

Belongs to the SelU family. In terms of assembly, monomer.

The enzyme catalyses 5-methylaminomethyl-2-thiouridine(34) in tRNA + selenophosphate + (2E)-geranyl diphosphate + H2O + H(+) = 5-methylaminomethyl-2-selenouridine(34) in tRNA + (2E)-thiogeraniol + phosphate + diphosphate. The catalysed reaction is 5-methylaminomethyl-2-thiouridine(34) in tRNA + (2E)-geranyl diphosphate = 5-methylaminomethyl-S-(2E)-geranyl-thiouridine(34) in tRNA + diphosphate. It carries out the reaction 5-methylaminomethyl-S-(2E)-geranyl-thiouridine(34) in tRNA + selenophosphate + H(+) = 5-methylaminomethyl-2-(Se-phospho)selenouridine(34) in tRNA + (2E)-thiogeraniol. It catalyses the reaction 5-methylaminomethyl-2-(Se-phospho)selenouridine(34) in tRNA + H2O = 5-methylaminomethyl-2-selenouridine(34) in tRNA + phosphate. In terms of biological role, involved in the post-transcriptional modification of the uridine at the wobble position (U34) of tRNA(Lys), tRNA(Glu) and tRNA(Gln). Catalyzes the conversion of 2-thiouridine (S2U-RNA) to 2-selenouridine (Se2U-RNA). Acts in a two-step process involving geranylation of 2-thiouridine (S2U) to S-geranyl-2-thiouridine (geS2U) and subsequent selenation of the latter derivative to 2-selenouridine (Se2U) in the tRNA chain. The sequence is that of tRNA 2-selenouridine synthase from Salmonella paratyphi A (strain ATCC 9150 / SARB42).